A 503-amino-acid chain; its full sequence is 3-octaprenyl-4-hydroxybenzoate carboxy-lyase (503 aa).

Asn176 is a Mn(2+) binding site. Prenylated FMN is bound by residues 179–181 (IYR), 193–195 (RWL), and 198–199 (RG). Glu242 contributes to the Mn(2+) binding site. The Proton donor role is filled by Asp303.

The protein belongs to the UbiD family. As to quaternary structure, homohexamer. Requires prenylated FMN as cofactor. Mn(2+) serves as cofactor.

It localises to the cell membrane. It catalyses the reaction a 4-hydroxy-3-(all-trans-polyprenyl)benzoate + H(+) = a 2-(all-trans-polyprenyl)phenol + CO2. The protein operates within cofactor biosynthesis; ubiquinone biosynthesis. Catalyzes the decarboxylation of 3-octaprenyl-4-hydroxy benzoate to 2-octaprenylphenol, an intermediate step in ubiquinone biosynthesis. The protein is 3-octaprenyl-4-hydroxybenzoate carboxy-lyase of Ralstonia nicotianae (strain ATCC BAA-1114 / GMI1000) (Ralstonia solanacearum).